The primary structure comprises 508 residues: MEEFQGYLELDRSRQHDFLYPLIFREYIYGLAHGHGLNRSGFLLLDNVDYDNKYSFLIVKRLIARMYQQNHFHICENDSALNQFIGHNKNLYSQMISEGFADIVEISLFIQLVSYLDGKATSKSLNLRSIHSIFPFLEDECSHLNYASDILIPHPTHLEILVEVLRYSVKDASFLHFLRFLLYEYWSWKSLSIKKKASSIVSKKNERFFVFLYNSHVCEYESILLFLRNQSSHLRSTSFGILLERIFFYKKIGGLVAIFGTPFEHIHILRFLKDPLIHYVRYQGKSILISKDRPLLMNKWKYYLVKLWQCHFYVWSQPGRIHINQLSQHSLHLLGYLLSVGTNPLVVRSQVFDNSFLIDNAMNKLETRIPLFSLIGSLTKAQFCNPLGQPISKSTWADSSDSDIIDRFVRMCRNLSHYYSGSSKKQSLYRLKYILRLSCVKTLARKHKSTVRAFLKKLGSELLEEFIKEEEQVLSLLFPRALSASRRLSTGRIWYFDILCINDLANHE.

This sequence belongs to the intron maturase 2 family. MatK subfamily.

The protein resides in the plastid. It localises to the chloroplast. Usually encoded in the trnK tRNA gene intron. Probably assists in splicing its own and other chloroplast group II introns. The protein is Maturase K of Pelargonium hortorum (Common geranium).